The chain runs to 63 residues: Large ribosomal subunit protein uL29 (63 aa).

This sequence belongs to the universal ribosomal protein uL29 family.

This is Large ribosomal subunit protein uL29 from Haemophilus influenzae (strain 86-028NP).